We begin with the raw amino-acid sequence, 252 residues long: 2-succinyl-6-hydroxy-2,4-cyclohexadiene-1-carboxylate synthase (252 aa).

The protein belongs to the AB hydrolase superfamily. MenH family. In terms of assembly, monomer.

The catalysed reaction is 5-enolpyruvoyl-6-hydroxy-2-succinyl-cyclohex-3-ene-1-carboxylate = (1R,6R)-6-hydroxy-2-succinyl-cyclohexa-2,4-diene-1-carboxylate + pyruvate. It participates in quinol/quinone metabolism; 1,4-dihydroxy-2-naphthoate biosynthesis; 1,4-dihydroxy-2-naphthoate from chorismate: step 3/7. It functions in the pathway quinol/quinone metabolism; menaquinone biosynthesis. Catalyzes a proton abstraction reaction that results in 2,5-elimination of pyruvate from 2-succinyl-5-enolpyruvyl-6-hydroxy-3-cyclohexene-1-carboxylate (SEPHCHC) and the formation of 2-succinyl-6-hydroxy-2,4-cyclohexadiene-1-carboxylate (SHCHC). The chain is 2-succinyl-6-hydroxy-2,4-cyclohexadiene-1-carboxylate synthase from Escherichia coli O17:K52:H18 (strain UMN026 / ExPEC).